The chain runs to 384 residues: Cyclohexane-1-carbonyl-CoA dehydrogenase (384 aa).

This sequence belongs to the acyl-CoA dehydrogenase family. As to quaternary structure, homotetramer. FAD serves as cofactor.

The catalysed reaction is cyclohexane-1-carbonyl-CoA + oxidized [electron-transfer flavoprotein] + H(+) = cyclohex-1-ene-1-carbonyl-CoA + reduced [electron-transfer flavoprotein]. Its function is as follows. Mediates the conversion of cyclohexane-1-carbonyl-CoA (ChCoA) into cyclohex-1-ene-1-carbonyl-CoA in biosynthesis of cyclohexane-1-carboxylate, a by-product produced during fermentation of benzoate and crotonate to acetate. The protein is Cyclohexane-1-carbonyl-CoA dehydrogenase of Syntrophus aciditrophicus (strain SB).